The following is a 496-amino-acid chain: Aspartyl/glutamyl-tRNA(Asn/Gln) amidotransferase subunit B (496 aa).

The protein belongs to the GatB/GatE family. GatB subfamily. As to quaternary structure, heterotrimer of A, B and C subunits.

It catalyses the reaction L-glutamyl-tRNA(Gln) + L-glutamine + ATP + H2O = L-glutaminyl-tRNA(Gln) + L-glutamate + ADP + phosphate + H(+). The enzyme catalyses L-aspartyl-tRNA(Asn) + L-glutamine + ATP + H2O = L-asparaginyl-tRNA(Asn) + L-glutamate + ADP + phosphate + 2 H(+). Its function is as follows. Allows the formation of correctly charged Asn-tRNA(Asn) or Gln-tRNA(Gln) through the transamidation of misacylated Asp-tRNA(Asn) or Glu-tRNA(Gln) in organisms which lack either or both of asparaginyl-tRNA or glutaminyl-tRNA synthetases. The reaction takes place in the presence of glutamine and ATP through an activated phospho-Asp-tRNA(Asn) or phospho-Glu-tRNA(Gln). The sequence is that of Aspartyl/glutamyl-tRNA(Asn/Gln) amidotransferase subunit B from Xanthobacter autotrophicus (strain ATCC BAA-1158 / Py2).